The sequence spans 391 residues: S-adenosylmethionine synthase (391 aa).

ATP is bound at residue His-14. Position 16 (Asp-16) interacts with Mg(2+). Position 42 (Glu-42) interacts with K(+). Glu-55 and Gln-98 together coordinate L-methionine. The tract at residues 98–108 (QSADIAMGVDE) is flexible loop. ATP-binding positions include 172–174 (DGK), 238–239 (RF), Asp-247, 253–254 (RK), Ala-270, and Lys-274. An L-methionine-binding site is contributed by Asp-247. An L-methionine-binding site is contributed by Lys-278.

Belongs to the AdoMet synthase family. As to quaternary structure, homotetramer; dimer of dimers. The cofactor is Mg(2+). Requires K(+) as cofactor.

It is found in the cytoplasm. It catalyses the reaction L-methionine + ATP + H2O = S-adenosyl-L-methionine + phosphate + diphosphate. It functions in the pathway amino-acid biosynthesis; S-adenosyl-L-methionine biosynthesis; S-adenosyl-L-methionine from L-methionine: step 1/1. Functionally, catalyzes the formation of S-adenosylmethionine (AdoMet) from methionine and ATP. The overall synthetic reaction is composed of two sequential steps, AdoMet formation and the subsequent tripolyphosphate hydrolysis which occurs prior to release of AdoMet from the enzyme. This is S-adenosylmethionine synthase from Clostridium acetobutylicum (strain ATCC 824 / DSM 792 / JCM 1419 / IAM 19013 / LMG 5710 / NBRC 13948 / NRRL B-527 / VKM B-1787 / 2291 / W).